Here is a 417-residue protein sequence, read N- to C-terminus: UDP-N-acetylglucosamine 1-carboxyvinyltransferase (417 aa).

22 to 23 (KN) lines the phosphoenolpyruvate pocket. Arginine 93 contacts UDP-N-acetyl-alpha-D-glucosamine. Cysteine 117 serves as the catalytic Proton donor. Cysteine 117 bears the 2-(S-cysteinyl)pyruvic acid O-phosphothioketal mark. UDP-N-acetyl-alpha-D-glucosamine is bound by residues 122 to 126 (RPVDQ), aspartate 305, and isoleucine 327.

This sequence belongs to the EPSP synthase family. MurA subfamily.

The protein localises to the cytoplasm. The enzyme catalyses phosphoenolpyruvate + UDP-N-acetyl-alpha-D-glucosamine = UDP-N-acetyl-3-O-(1-carboxyvinyl)-alpha-D-glucosamine + phosphate. It participates in cell wall biogenesis; peptidoglycan biosynthesis. Its function is as follows. Cell wall formation. Adds enolpyruvyl to UDP-N-acetylglucosamine. The chain is UDP-N-acetylglucosamine 1-carboxyvinyltransferase from Nitrosomonas europaea (strain ATCC 19718 / CIP 103999 / KCTC 2705 / NBRC 14298).